A 198-amino-acid chain; its full sequence is Recombination protein RecR (198 aa).

A C4-type zinc finger spans residues 57–72 (CSICGHITDQDPCYIC). One can recognise a Toprim domain in the interval 80-175 (SVICVVQDPK…KLSRIAHGLP (96 aa)).

This sequence belongs to the RecR family.

Functionally, may play a role in DNA repair. It seems to be involved in an RecBC-independent recombinational process of DNA repair. It may act with RecF and RecO. The polypeptide is Recombination protein RecR (Bacillus velezensis (strain DSM 23117 / BGSC 10A6 / LMG 26770 / FZB42) (Bacillus amyloliquefaciens subsp. plantarum)).